A 524-amino-acid chain; its full sequence is Translation initiation factor eIF2B subunit delta (524 aa).

Positions 1-173 (MATAAVAVRE…ERQQVPTRKD (173 aa)) are disordered. An N-acetylalanine modification is found at Ala-2. At Ser-12 the chain carries Phosphoserine. Residues 26–40 (AEGREMTQEEKLQLR) are compositionally biased toward basic and acidic residues. The segment covering 41-51 (KEKKQQKKKRK) has biased composition (basic residues). A Phosphothreonine modification is found at Thr-86. Composition is skewed to basic and acidic residues over residues 87 to 121 (AKEK…RKGD) and 161 to 173 (KKPE…TRKD). The tract at residues 171-180 (RKDYGSKVSL) is may bind the chemical integrated stress response (ISR) inhibitor ISRIB.

This sequence belongs to the eIF-2B alpha/beta/delta subunits family. As to quaternary structure, component of the translation initiation factor 2B (eIF2B) complex which is a heterodecamer of two sets of five different subunits: alpha, beta, gamma, delta and epsilon. Subunits alpha, beta and delta comprise a regulatory subcomplex and subunits epsilon and gamma comprise a catalytic subcomplex. Within the complex, the hexameric regulatory complex resides at the center, with the two heterodimeric catalytic subcomplexes bound on opposite sides.

The protein resides in the cytoplasm. The protein localises to the cytosol. Activated by the chemical integrated stress response (ISR) inhibitor ISRIB which stimulates guanine nucleotide exchange factor activity for both phosphorylated and unphosphorylated eIF2. In terms of biological role, acts as a component of the translation initiation factor 2B (eIF2B) complex, which catalyzes the exchange of GDP for GTP on eukaryotic initiation factor 2 (eIF2) gamma subunit. Its guanine nucleotide exchange factor activity is repressed when bound to eIF2 complex phosphorylated on the alpha subunit, thereby limiting the amount of methionyl-initiator methionine tRNA available to the ribosome and consequently global translation is repressed. The protein is Translation initiation factor eIF2B subunit delta (EIF2B4) of Bos taurus (Bovine).